A 34-amino-acid chain; its full sequence is Putative protein YmiB (34 aa).

A helical transmembrane segment spans residues 7–24 (TAAKRIVFFIYLFVIQFW).

Its subcellular location is the membrane. The sequence is that of Putative protein YmiB (ymiB) from Escherichia coli (strain K12).